The chain runs to 442 residues: tRNA modification GTPase MnmE (442 aa).

(6S)-5-formyl-5,6,7,8-tetrahydrofolate contacts are provided by R24, E82, and K122. Residues 219 to 366 (GFKVALVGEP…LRRALKREIE (148 aa)) enclose the TrmE-type G domain. N229 is a binding site for K(+). Residues 229–234 (NAGKST), 248–254 (TDIAGTT), and 273–276 (DTAG) contribute to the GTP site. S233 contacts Mg(2+). K(+) contacts are provided by T248, I250, and T253. T254 lines the Mg(2+) pocket. K442 is a (6S)-5-formyl-5,6,7,8-tetrahydrofolate binding site.

It belongs to the TRAFAC class TrmE-Era-EngA-EngB-Septin-like GTPase superfamily. TrmE GTPase family. As to quaternary structure, homodimer. Heterotetramer of two MnmE and two MnmG subunits. K(+) is required as a cofactor.

The protein localises to the cytoplasm. Exhibits a very high intrinsic GTPase hydrolysis rate. Involved in the addition of a carboxymethylaminomethyl (cmnm) group at the wobble position (U34) of certain tRNAs, forming tRNA-cmnm(5)s(2)U34. This is tRNA modification GTPase MnmE from Agrobacterium fabrum (strain C58 / ATCC 33970) (Agrobacterium tumefaciens (strain C58)).